A 260-amino-acid chain; its full sequence is Type III pantothenate kinase (260 aa).

ATP is bound at residue 6–13 (DCGNTNTV). Substrate is bound at residue 107-110 (GPDR). Catalysis depends on aspartate 109, which acts as the Proton acceptor. Aspartate 129 contributes to the K(+) binding site. Threonine 132 contributes to the ATP binding site. Threonine 184 serves as a coordination point for substrate.

Belongs to the type III pantothenate kinase family. As to quaternary structure, homodimer. The cofactor is NH4(+). It depends on K(+) as a cofactor.

The protein localises to the cytoplasm. It catalyses the reaction (R)-pantothenate + ATP = (R)-4'-phosphopantothenate + ADP + H(+). The protein operates within cofactor biosynthesis; coenzyme A biosynthesis; CoA from (R)-pantothenate: step 1/5. Catalyzes the phosphorylation of pantothenate (Pan), the first step in CoA biosynthesis. This Ruegeria sp. (strain TM1040) (Silicibacter sp.) protein is Type III pantothenate kinase.